The primary structure comprises 456 residues: Bifunctional protein GlmU (456 aa).

The interval 1–229 (MLNSAMSVVI…ISETDGVNNR (229 aa)) is pyrophosphorylase. UDP-N-acetyl-alpha-D-glucosamine-binding positions include 11-14 (LAAG), Lys25, Gln76, 81-82 (GT), 103-105 (YGD), Gly140, Glu154, Asn169, and Asn227. Asp105 is a Mg(2+) binding site. Asn227 provides a ligand contact to Mg(2+). The tract at residues 230–250 (LQLSRLERIYQAEQAEKLLLS) is linker. Residues 251–456 (GVMLRDPARF…QGWQRPVKKK (206 aa)) are N-acetyltransferase. Residues Arg333 and Lys351 each contribute to the UDP-N-acetyl-alpha-D-glucosamine site. His363 functions as the Proton acceptor in the catalytic mechanism. UDP-N-acetyl-alpha-D-glucosamine is bound by residues Tyr366 and Asn377. Residues Ala380, 386-387 (NY), Ser405, Ala423, and Arg440 each bind acetyl-CoA.

This sequence in the N-terminal section; belongs to the N-acetylglucosamine-1-phosphate uridyltransferase family. In the C-terminal section; belongs to the transferase hexapeptide repeat family. Homotrimer. Requires Mg(2+) as cofactor.

It localises to the cytoplasm. The enzyme catalyses alpha-D-glucosamine 1-phosphate + acetyl-CoA = N-acetyl-alpha-D-glucosamine 1-phosphate + CoA + H(+). It catalyses the reaction N-acetyl-alpha-D-glucosamine 1-phosphate + UTP + H(+) = UDP-N-acetyl-alpha-D-glucosamine + diphosphate. Its pathway is nucleotide-sugar biosynthesis; UDP-N-acetyl-alpha-D-glucosamine biosynthesis; N-acetyl-alpha-D-glucosamine 1-phosphate from alpha-D-glucosamine 6-phosphate (route II): step 2/2. The protein operates within nucleotide-sugar biosynthesis; UDP-N-acetyl-alpha-D-glucosamine biosynthesis; UDP-N-acetyl-alpha-D-glucosamine from N-acetyl-alpha-D-glucosamine 1-phosphate: step 1/1. It functions in the pathway bacterial outer membrane biogenesis; LPS lipid A biosynthesis. Catalyzes the last two sequential reactions in the de novo biosynthetic pathway for UDP-N-acetylglucosamine (UDP-GlcNAc). The C-terminal domain catalyzes the transfer of acetyl group from acetyl coenzyme A to glucosamine-1-phosphate (GlcN-1-P) to produce N-acetylglucosamine-1-phosphate (GlcNAc-1-P), which is converted into UDP-GlcNAc by the transfer of uridine 5-monophosphate (from uridine 5-triphosphate), a reaction catalyzed by the N-terminal domain. The chain is Bifunctional protein GlmU from Salmonella typhi.